The following is a 448-amino-acid chain: Methylenetetrahydrofolate--tRNA-(uracil-5-)-methyltransferase TrmFO (448 aa).

13-18 (GAGLAG) provides a ligand contact to FAD.

The protein belongs to the MnmG family. TrmFO subfamily. It depends on FAD as a cofactor.

It is found in the cytoplasm. The enzyme catalyses uridine(54) in tRNA + (6R)-5,10-methylene-5,6,7,8-tetrahydrofolate + NADH + H(+) = 5-methyluridine(54) in tRNA + (6S)-5,6,7,8-tetrahydrofolate + NAD(+). It carries out the reaction uridine(54) in tRNA + (6R)-5,10-methylene-5,6,7,8-tetrahydrofolate + NADPH + H(+) = 5-methyluridine(54) in tRNA + (6S)-5,6,7,8-tetrahydrofolate + NADP(+). Its function is as follows. Catalyzes the folate-dependent formation of 5-methyl-uridine at position 54 (M-5-U54) in all tRNAs. The sequence is that of Methylenetetrahydrofolate--tRNA-(uracil-5-)-methyltransferase TrmFO from Streptococcus pyogenes serotype M1.